The following is a 226-amino-acid chain: Large ribosomal subunit protein uL1 (226 aa).

It belongs to the universal ribosomal protein uL1 family. In terms of assembly, part of the 50S ribosomal subunit.

Functionally, binds directly to 23S rRNA. The L1 stalk is quite mobile in the ribosome, and is involved in E site tRNA release. Protein L1 is also a translational repressor protein, it controls the translation of the L11 operon by binding to its mRNA. The chain is Large ribosomal subunit protein uL1 from Borreliella afzelii (strain PKo) (Borrelia afzelii).